Here is a 287-residue protein sequence, read N- to C-terminus: Hydroxysteroid 11-beta-dehydrogenase 1-like protein (287 aa).

The N-terminal stretch at 1-20 is a signal peptide; that stretch reads MMKPFGKVLCAAGSLAVLLA. Residues 41-67, 92-93, and 119-121 contribute to the NADP(+) site; these read GASAGIGEQMAYHYATFGAEIVLTARR, DM, and NHI. Substrate is bound at residue Ser170. Catalysis depends on Tyr183, which acts as the Proton acceptor. Residues 183–187 and 216–222 contribute to the NADP(+) site; these read YSATK and GLIDTDA.

The protein belongs to the short-chain dehydrogenases/reductases (SDR) family.

Its subcellular location is the secreted. It catalyses the reaction cortisone + NADPH + H(+) = cortisol + NADP(+). Its function is as follows. Unidirectional NADP(+)-dependent cortisol dehydrogenase (in vitro). In Gallus gallus (Chicken), this protein is Hydroxysteroid 11-beta-dehydrogenase 1-like protein (HSD11B1L).